Consider the following 259-residue polypeptide: Secretion system apparatus protein SsaT (259 aa).

The next 6 helical transmembrane spans lie at 9 to 29 (LIAL…LPLL), 35 to 55 (GAAL…LPII), 78 to 98 (VIIG…VDMA), 127 to 147 (LLFS…EFIL), 185 to 205 (ISFS…LGLL), and 214 to 234 (VFFF…LISF).

Belongs to the FliR/MopE/SpaR family.

It localises to the cell membrane. Part of a type III secretion system. The protein is Secretion system apparatus protein SsaT (ssaT) of Salmonella typhimurium (strain LT2 / SGSC1412 / ATCC 700720).